The following is an 81-amino-acid chain: Protein Vpu (81 aa).

At 1 to 7 the chain is on the extracellular side; sequence MQSLEIL. The chain crosses the membrane as a helical span at residues 8–28; the sequence is AIVALVVAAILAIVVWTIVGI. Topologically, residues 29 to 81 are cytoplasmic; the sequence is EIRKTLRQKKIDRLIDRIRERAEDSGNESDGDEEELSALVEMGHHAPWDVDDL. The disordered stretch occupies residues 50-81; it reads AEDSGNESDGDEEELSALVEMGHHAPWDVDDL. 2 positions are modified to phosphoserine; by host CK2: serine 53 and serine 57. The span at 53–64 shows a compositional bias: acidic residues; sequence SGNESDGDEEEL. Residues 70–81 are compositionally biased toward basic and acidic residues; that stretch reads MGHHAPWDVDDL.

It belongs to the HIV-1 VPU protein family. In terms of assembly, homopentamer. Interacts with host CD4 and BRTC; these interactions induce proteasomal degradation of CD4. Interacts with host BST2; this interaction leads to the degradation of host BST2. Interacts with host FBXW11. Interacts with host AP1M1; this interaction plays a role in the mistrafficking and subsequent degradation of host BST2. Interacts with host RANBP2; this interaction allows Vpu to down-regulate host BLM sumoylation. Phosphorylated by host CK2. This phosphorylation is necessary for interaction with human BTRC and degradation of CD4.

The protein localises to the host membrane. Ion channel activity is inhibited by hexamethylene amiloride in vitro. Functionally, enhances virion budding by targeting host CD4 and Tetherin/BST2 to proteasome degradation. Degradation of CD4 prevents any unwanted premature interactions between viral Env and its host receptor CD4 in the endoplasmic reticulum. Degradation of antiretroviral protein Tetherin/BST2 is important for virion budding, as BST2 tethers new viral particles to the host cell membrane. Mechanistically, Vpu bridges either CD4 or BST2 to BTRC, a substrate recognition subunit of the Skp1/Cullin/F-box protein E3 ubiquitin ligase, induces their ubiquitination and subsequent proteasomal degradation. The alteration of the E3 ligase specificity by Vpu seems to promote the degradation of host IKBKB, leading to NF-kappa-B down-regulation and subsequent apoptosis. Acts as a viroporin that forms an oligomeric ion channel in membranes. Modulates the host DNA repair mechanisms to promote degradation of nuclear viral cDNA in cells that are already productively infected in order to suppress immune sensing and proviral hyper-integration (superinfection). Manipulates PML-NBs and modulates SUMOylation of host BLM protein thereby enhancing its DNA-end processing activity toward viral unintegrated linear DNA. Also inhibits RAD52-mediated homologous repair of viral cDNA, preventing the generation of dead-end circular forms of single copies of the long terminal repeat and permitting sustained nucleolytic attack. In Homo sapiens (Human), this protein is Protein Vpu.